Here is a 138-residue protein sequence, read N- to C-terminus: MAPK kinase substrate protein At1g80180 (138 aa).

The disordered stretch occupies residues 52-138; sequence TSEVQDQTTK…RKRPAKRRSR (87 aa). The span at 69-81 shows a compositional bias: basic and acidic residues; the sequence is KPIRTDGGMERSR. The residue at position 98 (S98) is a Phosphoserine. S105 carries the phosphoserine; by MAPK6 modification. A compositionally biased stretch (basic residues) spans 121-138; it reads QPGKKVNQRKRPAKRRSR.

Expressed in developing cotyledons, mature cotyledons, cotyledon epidermis and stomata.

Functionally, may play a role in the regulation of stomata patterning. This chain is MAPK kinase substrate protein At1g80180, found in Arabidopsis thaliana (Mouse-ear cress).